The chain runs to 239 residues: Cytochrome b6-f complex iron-sulfur subunit 1, cyanelle (239 aa).

Residues 1–60 (MAFTTTAVVAPRGAKITGQSSTCAIQNGKTVAVGTSKQVGSFKPVFAAAKPAKETTFSVS) constitute a cyanelle transit peptide. A helical membrane pass occupies residues 81 to 101 (LLGAIAGPVAGAGGPFVSFLV). The Rieske domain occupies 125-221 (VSSWLETHKP…VSVLEDGVVA (97 aa)). Cys167, His169, Cys185, and His188 together coordinate [2Fe-2S] cluster. Cys172 and Cys187 are disulfide-bonded.

Belongs to the Rieske iron-sulfur protein family. The 4 large subunits of the cytochrome b6-f complex are cytochrome b6, subunit IV (17 kDa polypeptide, petD), cytochrome f and the Rieske protein, while the 4 small subunits are petG, petL, petM and petN. The complex functions as a dimer. The cofactor is [2Fe-2S] cluster.

It localises to the plastid. The protein resides in the cyanelle thylakoid membrane. It carries out the reaction 2 oxidized [plastocyanin] + a plastoquinol + 2 H(+)(in) = 2 reduced [plastocyanin] + a plastoquinone + 4 H(+)(out). In terms of biological role, component of the cytochrome b6-f complex, which mediates electron transfer between photosystem II (PSII) and photosystem I (PSI), cyclic electron flow around PSI, and state transitions. This Cyanophora paradoxa protein is Cytochrome b6-f complex iron-sulfur subunit 1, cyanelle (petC-1).